The sequence spans 288 residues: Small ribosomal subunit biogenesis GTPase RsgA (288 aa).

One can recognise a CP-type G domain in the interval 61–218; that stretch reads TNKLIRPPVS…IVDTPGFSSL (158 aa). Residues 110 to 113 and 161 to 169 contribute to the GTP site; these read NKID and GPSGVGKST. Zn(2+) contacts are provided by C242, C247, H249, and C255.

It belongs to the TRAFAC class YlqF/YawG GTPase family. RsgA subfamily. In terms of assembly, monomer. Associates with 30S ribosomal subunit, binds 16S rRNA. The cofactor is Zn(2+).

The protein localises to the cytoplasm. Its function is as follows. One of several proteins that assist in the late maturation steps of the functional core of the 30S ribosomal subunit. Helps release RbfA from mature subunits. May play a role in the assembly of ribosomal proteins into the subunit. Circularly permuted GTPase that catalyzes slow GTP hydrolysis, GTPase activity is stimulated by the 30S ribosomal subunit. In Clostridium acetobutylicum (strain ATCC 824 / DSM 792 / JCM 1419 / IAM 19013 / LMG 5710 / NBRC 13948 / NRRL B-527 / VKM B-1787 / 2291 / W), this protein is Small ribosomal subunit biogenesis GTPase RsgA.